The sequence spans 129 residues: PGLAFSGLTPEHSALARAHPCDGEQFCQNLAPEDPQGDQLLQREELGLICESCRKIIQKLEDMVGPQPNEDTVTQAASRVCDKMKILRGVCKKIMRTFLRRISKDILTGKKPQAICVDIKICKEKTGLI.

Residues 1–6 (PGLAFS) form the signal peptide. The propeptide occupies 7 to 46 (GLTPEHSALARAHPCDGEQFCQNLAPEDPQGDQLLQREEL). The 81-residue stretch at 46 to 126 (LGLICESCRK…VDIKICKEKT (81 aa)) folds into the Saposin B-type domain. Cystine bridges form between cysteine 50–cysteine 122, cysteine 53–cysteine 116, and cysteine 81–cysteine 91. A propeptide spanning residues 125-129 (KTGLI) is cleaved from the precursor.

In terms of tissue distribution, cytotoxic T and NK cells.

The protein localises to the secreted. Its function is as follows. May be an effector molecule of cytotoxic activity. High activity against E.coli and B.megaterium, moderate against A.calcoaceticus and S.pyogenes. No activity against P.aeruginosa, S.aureus and Salmonella. Has some antifungal activity against C.albicans. The chain is Antimicrobial peptide NK-lysin (NKL) from Sus scrofa (Pig).